The sequence spans 176 residues: Urease accessory protein UreE (176 aa).

The segment at 134-176 is disordered; sequence FTPEGGAYGHGRTHAHEHGHTNHHGQHHDHADHGHSHDHSHDQ. The segment covering 161-176 has biased composition (basic and acidic residues); the sequence is HDHADHGHSHDHSHDQ.

This sequence belongs to the UreE family.

The protein resides in the cytoplasm. Its function is as follows. Involved in urease metallocenter assembly. Binds nickel. Probably functions as a nickel donor during metallocenter assembly. The chain is Urease accessory protein UreE from Ruegeria sp. (strain TM1040) (Silicibacter sp.).